A 292-amino-acid polypeptide reads, in one-letter code: ATP synthase gamma chain (292 aa).

It belongs to the ATPase gamma chain family. As to quaternary structure, F-type ATPases have 2 components, CF(1) - the catalytic core - and CF(0) - the membrane proton channel. CF(1) has five subunits: alpha(3), beta(3), gamma(1), delta(1), epsilon(1). CF(0) has three main subunits: a, b and c.

It is found in the cell inner membrane. Produces ATP from ADP in the presence of a proton gradient across the membrane. The gamma chain is believed to be important in regulating ATPase activity and the flow of protons through the CF(0) complex. The sequence is that of ATP synthase gamma chain from Brucella anthropi (strain ATCC 49188 / DSM 6882 / CCUG 24695 / JCM 21032 / LMG 3331 / NBRC 15819 / NCTC 12168 / Alc 37) (Ochrobactrum anthropi).